Here is a 936-residue protein sequence, read N- to C-terminus: Phosphoenolpyruvate carboxylase (936 aa).

Residues histidine 155 and lysine 595 contribute to the active site.

Belongs to the PEPCase type 1 family. Homotetramer. Mg(2+) is required as a cofactor. The cofactor is Mn(2+).

The enzyme catalyses oxaloacetate + phosphate = phosphoenolpyruvate + hydrogencarbonate. Exhibits positive allosteric property with acetyl-CoA and fructose 1,6-bisphosphate, and a negative one with L-aspartate and L-malate. In terms of biological role, forms oxaloacetate, a four-carbon dicarboxylic acid source for the tricarboxylic acid cycle. This Rhodothermus marinus (Rhodothermus obamensis) protein is Phosphoenolpyruvate carboxylase (ppc).